The sequence spans 112 residues: Nucleoid-associated protein CV_1611 (112 aa).

This sequence belongs to the YbaB/EbfC family. As to quaternary structure, homodimer.

It localises to the cytoplasm. It is found in the nucleoid. Its function is as follows. Binds to DNA and alters its conformation. May be involved in regulation of gene expression, nucleoid organization and DNA protection. This chain is Nucleoid-associated protein CV_1611, found in Chromobacterium violaceum (strain ATCC 12472 / DSM 30191 / JCM 1249 / CCUG 213 / NBRC 12614 / NCIMB 9131 / NCTC 9757 / MK).